The primary structure comprises 171 residues: Disulfide bond formation protein B (171 aa).

Over 1–13 (MTFISNLADTRLA) the chain is Cytoplasmic. The chain crosses the membrane as a helical span at residues 14–30 (WGLLFLSALVLVAYALF). At 31 to 48 (SQHAMGLQPCIMCIYQRT) the chain is on the periplasmic side. Cysteine 40 and cysteine 43 are disulfide-bonded. A helical membrane pass occupies residues 49-63 (AIFGIMFACVPVLAA). Residues 64–70 (NNMLTRL) are Cytoplasmic-facing. Residues 71 to 88 (FAFTVWGISAIWGGLIAW) form a helical membrane-spanning segment. Residues 89–144 (EHYDIQNAANPFFATCEIVPNFPSWLPLHEWLPNLFAATGDCGNIDWVFMDMSMPQ) are Periplasmic-facing. Cysteine 104 and cysteine 130 are oxidised to a cystine. The chain crosses the membrane as a helical span at residues 145–163 (WMMVVFAIYSSIWFVVLAS). Residues 164-171 (RLIGNRAI) lie on the Cytoplasmic side of the membrane.

This sequence belongs to the DsbB family.

The protein resides in the cell inner membrane. Its function is as follows. Required for disulfide bond formation in some periplasmic proteins. Acts by oxidizing the DsbA protein. This Pseudoalteromonas atlantica (strain T6c / ATCC BAA-1087) protein is Disulfide bond formation protein B.